The chain runs to 162 residues: Disulfide bond formation protein B (162 aa).

Residues 1–8 (MTPLFRKA) are Cytoplasmic-facing. Residues 9-25 (VWLLFAVSVCAFAGSLA) traverse the membrane as a helical segment. At 26-43 (AQYVLGMEPCVLCISQRL) the chain is on the periplasmic side. Cys35 and Cys38 are joined by a disulfide. A helical transmembrane segment spans residues 44-60 (CVLATALCAAVVLACKP). Residues 61–67 (KGRVGGL) are Cytoplasmic-facing. The helical transmembrane segment at 68 to 85 (SGAVFISIPAVTGISVAA) threads the bilayer. The Periplasmic portion of the chain corresponds to 86 to 141 (YQLWLQSLPPGAAPSCGAPWTFRLKGWPLFDWFEPVVRGFGNCAEPDYLLGVALPV). Cys101 and Cys128 form a disulfide bridge. Residues 142–160 (WSAAYFLAVVLTVWWAWAR) form a helical membrane-spanning segment. Residues 161-162 (AK) are Cytoplasmic-facing.

This sequence belongs to the DsbB family.

Its subcellular location is the cell inner membrane. In terms of biological role, required for disulfide bond formation in some periplasmic proteins. Acts by oxidizing the DsbA protein. This Neisseria gonorrhoeae (strain ATCC 700825 / FA 1090) protein is Disulfide bond formation protein B.